A 57-amino-acid polypeptide reads, in one-letter code: Aminopeptidase A (57 aa).

Residues 1–57 (YLTDHYFKVDLNSTVTQQRFLLDPSELAGITIMQPSDSNIEWLKQYRDDVATWLENS) are Extracellular-facing. Asn-12 is a glycosylation site (N-linked (GlcNAc...) asparagine).

This sequence belongs to the peptidase M1 family. As to quaternary structure, homodimer; disulfide-linked. The cofactor is Zn(2+).

The protein resides in the cell membrane. It catalyses the reaction Release of N-terminal glutamate (and to a lesser extent aspartate) from a peptide.. With respect to regulation, inhibited by the aminopeptidase competitive inhibitors amastatin (Leu and acidic inhibitor), and bestatin (Leu inhibitor), by chelating agents EDTA, and 1,10-Phenanthroline, as well as by Zn(2+) ions. Substrate specificity is modulated by Ca(2+), Ba(2+), and Mn(2+) ions which enhances the enzymatic activity for cleavage of acidic residues. In terms of biological role, venom protein that cleaves N-terminal acidic residues from peptides with high potency in presence of calcium. It may have several roles in venom including alteration of blood pressure by cleaving circulating angiotensin-2, general degradation of host tissue, increase of permeability to other venom components, and/or processing of other toxins in the venom. This chain is Aminopeptidase A, found in Gloydius blomhoffii (Mamushi).